The following is a 598-amino-acid chain: Vanadium-dependent bromoperoxidase (598 aa).

The Ca(2+) site is built by Phe-361, Gln-363, Asp-365, Asp-368, and Gln-370. Vanadate contacts are provided by Lys-400 and Arg-408. The active site involves His-480. The vanadate site is built by Ser-485, Gly-486, His-487, Arg-547, and His-553. His-487 is an active-site residue.

It belongs to the vanadium-dependent haloperoxidase family. In terms of assembly, homododecamer. Requires Ca(2+) as cofactor. The cofactor is vanadate.

The enzyme catalyses RH + Br(-) + H2O2 = RBr + 2 H2O.. Catalyzes the halogenation of organic substrates in the presence of hydrogen peroxide. The polypeptide is Vanadium-dependent bromoperoxidase (Corallina officinalis (Coral seaweed)).